Here is a 146-residue protein sequence, read N- to C-terminus: Large ribosomal subunit protein uL15 (146 aa).

Positions 1–53 (MILSNLKPVPGARHSKKRLGRGPGSGTGKTSGKGHKGQKARSGGGVRPGFEGG) are disordered. Composition is skewed to gly residues over residues 21-31 (RGPGSGTGKTS) and 42-52 (SGGGVRPGFEG).

This sequence belongs to the universal ribosomal protein uL15 family. Part of the 50S ribosomal subunit.

Binds to the 23S rRNA. In Acholeplasma laidlawii (strain PG-8A), this protein is Large ribosomal subunit protein uL15.